The sequence spans 245 residues: Tyrosine recombinase XerD-like (245 aa).

Residues 1-72 (MITFISKFLA…AVNQFLFFLY (72 aa)) enclose the Core-binding (CB) domain. One can recognise a Tyr recombinase domain in the interval 90–245 (PLLTPAYQEV…PVTLEKYFKN (156 aa)). Catalysis depends on residues K151 and R210. The active-site O-(3'-phospho-DNA)-tyrosine intermediate is Y242.

Belongs to the 'phage' integrase family. XerD-like subfamily.

It is found in the cytoplasm. Putative tyrosine recombinase. Not involved in the cutting and rejoining of the recombining DNA molecules on dif(SL) site. This Streptococcus mutans serotype c (strain ATCC 700610 / UA159) protein is Tyrosine recombinase XerD-like.